The following is a 181-amino-acid chain: DKIPNFVVPGKCASVDRNKLWAEQTPNRNSYAGVWYQFALTNNPYQLIEKCVRNEYSFDGKQFVIKSTGIAYDGNLLKRNGKLYPNPFGEPHLSIDYENSFAAPLVILETDYSNYACLYSCIDYNFGYHSDFSFIFSRSANLADQYVKKCEAAFKNINVDTTRFVKTVQGSSCPYDTQKTV.

3 cysteine pairs are disulfide-bonded: C12-C121, C51-C173, and C117-C150.

The protein belongs to the calycin superfamily. Lipocalin family. Oligomer; Can form dimers (beta-crustacyanin); or complexes of 16 subunits (alpha-crustacyanin). There are five types of subunits: A1, A2, A3, C1 and C2. Found in the carapace.

The protein localises to the secreted. The protein resides in the extracellular space. Its function is as follows. Binds the carotenoid astaxanthin (AXT) which provides the blue coloration to the carapace of the lobster. The protein is Crustacyanin-A1 subunit of Homarus gammarus (European lobster).